Here is a 220-residue protein sequence, read N- to C-terminus: Putative threonylcarbamoyl-AMP synthase (220 aa).

Positions 17–202 (ARGIASAVAA…TPRILRAGPV (186 aa)) constitute a YrdC-like domain.

The protein belongs to the SUA5 family.

It is found in the cytoplasm. The catalysed reaction is L-threonine + hydrogencarbonate + ATP = L-threonylcarbamoyladenylate + diphosphate + H2O. In terms of biological role, required for the formation of a threonylcarbamoyl group on adenosine at position 37 (t(6)A37) in tRNAs that read codons beginning with adenine. Catalyzes the conversion of L-threonine, HCO(3)(-)/CO(2) and ATP to give threonylcarbamoyl-AMP (TC-AMP) as the acyladenylate intermediate, with the release of diphosphate. This Mycobacterium leprae (strain TN) protein is Putative threonylcarbamoyl-AMP synthase.